Consider the following 534-residue polypeptide: Peptide chain release factor 3 (534 aa).

The tr-type G domain maps to 9–278; the sequence is SRRRTFAIIS…FFVEHAPSPQ (270 aa). GTP-binding positions include 18 to 25, 86 to 90, and 140 to 143; these read SHPDAGKT, DTPGH, and NKLD.

This sequence belongs to the TRAFAC class translation factor GTPase superfamily. Classic translation factor GTPase family. PrfC subfamily.

It localises to the cytoplasm. In terms of biological role, increases the formation of ribosomal termination complexes and stimulates activities of RF-1 and RF-2. It binds guanine nucleotides and has strong preference for UGA stop codons. It may interact directly with the ribosome. The stimulation of RF-1 and RF-2 is significantly reduced by GTP and GDP, but not by GMP. The sequence is that of Peptide chain release factor 3 from Stenotrophomonas maltophilia (strain K279a).